The chain runs to 632 residues: 1-deoxy-D-xylulose-5-phosphate synthase (632 aa).

Thiamine diphosphate-binding positions include His-87 and 128–130; that span reads GHS. Residue Asp-159 coordinates Mg(2+). Residues 160–161, Asn-188, Phe-295, and Glu-377 each bind thiamine diphosphate; that span reads GA. Asn-188 contacts Mg(2+).

Belongs to the transketolase family. DXPS subfamily. As to quaternary structure, homodimer. It depends on Mg(2+) as a cofactor. Requires thiamine diphosphate as cofactor.

The enzyme catalyses D-glyceraldehyde 3-phosphate + pyruvate + H(+) = 1-deoxy-D-xylulose 5-phosphate + CO2. It functions in the pathway metabolic intermediate biosynthesis; 1-deoxy-D-xylulose 5-phosphate biosynthesis; 1-deoxy-D-xylulose 5-phosphate from D-glyceraldehyde 3-phosphate and pyruvate: step 1/1. Catalyzes the acyloin condensation reaction between C atoms 2 and 3 of pyruvate and glyceraldehyde 3-phosphate to yield 1-deoxy-D-xylulose-5-phosphate (DXP). This is 1-deoxy-D-xylulose-5-phosphate synthase from Stutzerimonas stutzeri (strain A1501) (Pseudomonas stutzeri).